We begin with the raw amino-acid sequence, 614 residues long: DNA mismatch repair protein MutL (614 aa).

Belongs to the DNA mismatch repair MutL/HexB family.

In terms of biological role, this protein is involved in the repair of mismatches in DNA. It is required for dam-dependent methyl-directed DNA mismatch repair. May act as a 'molecular matchmaker', a protein that promotes the formation of a stable complex between two or more DNA-binding proteins in an ATP-dependent manner without itself being part of a final effector complex. This is DNA mismatch repair protein MutL from Leptospira biflexa serovar Patoc (strain Patoc 1 / ATCC 23582 / Paris).